The sequence spans 205 residues: Thiamine-phosphate synthase (205 aa).

4-amino-2-methyl-5-(diphosphooxymethyl)pyrimidine contacts are provided by residues 35–39 and Asn67; that span reads QYRDK. Mg(2+)-binding residues include Asp68 and Asp86. Thr105 serves as a coordination point for 4-amino-2-methyl-5-(diphosphooxymethyl)pyrimidine. 132-134 serves as a coordination point for 2-[(2R,5Z)-2-carboxy-4-methylthiazol-5(2H)-ylidene]ethyl phosphate; it reads SLT. Lys135 provides a ligand contact to 4-amino-2-methyl-5-(diphosphooxymethyl)pyrimidine. Gly162 is a 2-[(2R,5Z)-2-carboxy-4-methylthiazol-5(2H)-ylidene]ethyl phosphate binding site.

This sequence belongs to the thiamine-phosphate synthase family. Mg(2+) is required as a cofactor.

The catalysed reaction is 2-[(2R,5Z)-2-carboxy-4-methylthiazol-5(2H)-ylidene]ethyl phosphate + 4-amino-2-methyl-5-(diphosphooxymethyl)pyrimidine + 2 H(+) = thiamine phosphate + CO2 + diphosphate. It carries out the reaction 2-(2-carboxy-4-methylthiazol-5-yl)ethyl phosphate + 4-amino-2-methyl-5-(diphosphooxymethyl)pyrimidine + 2 H(+) = thiamine phosphate + CO2 + diphosphate. The enzyme catalyses 4-methyl-5-(2-phosphooxyethyl)-thiazole + 4-amino-2-methyl-5-(diphosphooxymethyl)pyrimidine + H(+) = thiamine phosphate + diphosphate. Its pathway is cofactor biosynthesis; thiamine diphosphate biosynthesis; thiamine phosphate from 4-amino-2-methyl-5-diphosphomethylpyrimidine and 4-methyl-5-(2-phosphoethyl)-thiazole: step 1/1. Its function is as follows. Condenses 4-methyl-5-(beta-hydroxyethyl)thiazole monophosphate (THZ-P) and 2-methyl-4-amino-5-hydroxymethyl pyrimidine pyrophosphate (HMP-PP) to form thiamine monophosphate (TMP). The polypeptide is Thiamine-phosphate synthase (Pseudomonas savastanoi pv. phaseolicola (strain 1448A / Race 6) (Pseudomonas syringae pv. phaseolicola (strain 1448A / Race 6))).